The chain runs to 218 residues: Cell division protein SepF (218 aa).

The disordered stretch occupies residues 25-115; the sequence is DVAASTDNVI…IANRREQYQQ (91 aa). The segment covering 29 to 43 has biased composition (polar residues); that stretch reads STDNVIPRSQQSVRA. Residues 47–63 are compositionally biased toward basic and acidic residues; sequence PKQEPRNNHVQQDHQAR. Polar residues predominate over residues 102–115; the sequence is STSSIANRREQYQQ.

Belongs to the SepF family. Homodimer. Interacts with FtsZ.

The protein localises to the cytoplasm. Cell division protein that is part of the divisome complex and is recruited early to the Z-ring. Probably stimulates Z-ring formation, perhaps through the cross-linking of FtsZ protofilaments. Its function overlaps with FtsA. The sequence is that of Cell division protein SepF from Streptococcus pyogenes serotype M5 (strain Manfredo).